The primary structure comprises 25 residues: Putative cytochrome c4 (25 aa).

The interval 1 to 25 is disordered; it reads QEDIEAGKQKSATCTACHGQEGNST. Residues C14 and C17 each coordinate heme.

Binds 2 heme groups per subunit.

Its subcellular location is the periplasm. Its function is as follows. Diheme, high potential cytochrome c believed to be an intermediate electron donor to terminal oxidation systems. This Aliivibrio fischeri (Vibrio fischeri) protein is Putative cytochrome c4.